Consider the following 549-residue polypeptide: MSHGPSPRLAESPQLSKSSLLTILGSPSPERMGPADSLPPTPPSGTPSPGPPPSLPLTAPALLADGDWESREELRLRELEEARARALQMEKTMRWWSDCTANWREKWSKVRAERNRAREEVRQLRQRLDTLTKELAGARRERQEAQGECEARGRELARLRGVHSAADKTHDGPEPEREQEPVRDIGAERPPGSQELDLVESLLKSRPEEPEGCWDACSVAAGGPRVSSGRQDRNRLPWEDTASTEEDASKLTALRLRLDESQKVLLKEREDKLALSKNIEKLEGELSQWKIKYEELSKTKQEMLKQLSILKETHQDELGRMSEDLEDELGARSSMDRKMAELRGEMERLQAENAAEWGRRERLETEKLGLERENKKLRAQVGDLEEALARRRRQNASALDCDLRASQAALFEKNKELADLKHVHGKLKKQFQEKVAELAHANRRVEQHETEVKKLRLRVEELKKELAQAEDELDEAHNQARKLQRSLDEQTEQSENLQVQLEHLQSRLRRQQQNAPLFGKIRSTRFGTEEAGDGASDLDEDEDLQIQVA.

Disordered regions lie at residues 1 to 61, 135 to 195, and 207 to 248; these read MSHG…TAPA, LAGA…GSQE, and PEEP…EEDA. A phosphoserine mark is found at S12, S26, and S28. Positions 37–55 are enriched in pro residues; sequence SLPPTPPSGTPSPGPPPSL. Positions 69-160 form a coiled coil; sequence ESREELRLRE…ARGRELARLR (92 aa). 2 stretches are compositionally biased toward basic and acidic residues: residues 135–158 and 165–187; these read LAGA…ELAR and AADK…DIGA. Coiled coils occupy residues 263-398 and 426-517; these read KVLL…NASA and KLKK…NAPL. Disordered regions lie at residues 472–496 and 509–549; these read ELDE…QSEN and RRQQ…IQVA. Over residues 530-549 the composition is skewed to acidic residues; the sequence is EAGDGASDLDEDEDLQIQVA. At S536 the chain carries Phosphoserine.

The chain is Coiled-coil domain-containing protein 102A (Ccdc102a) from Mus musculus (Mouse).